A 414-amino-acid polypeptide reads, in one-letter code: Probable aminotransferase TAT2 (414 aa).

The protein belongs to the class-I pyridoxal-phosphate-dependent aminotransferase family. Pyridoxal 5'-phosphate is required as a cofactor.

The chain is Probable aminotransferase TAT2 from Arabidopsis thaliana (Mouse-ear cress).